The primary structure comprises 367 residues: MHINVRGTRKIISNVSSFTPRYEFPKYSMPLTDFKGHQVKALKTFEKLLPQMNMIIELRDIRAPLSTRNVVFDRIARKEHDVMKLVVYTRKDLMPGNKPYIGKLKNWHEELGEKFILLDCRNKTDVRNLLKILEWQNYELETNGGYLPMGYRALITGMPNVGKSTLINSLRTIFHNQVNMGRKFKKVAKTGAEAGVTRATSEVIRVTSRNTESRNEIYLIDTPGIGVPGRVSDHNRMLGLALCGSVKNNLVDPIFQADYLLYLMNLQNLNDGRTELYPGSTNSPTNDIYDVLRRLQVNKSQNEKSTAIEWTNKWRLHGKGIIFDPEVLLNNDEFSYKNYVNDQLEKLGDLSYEGLSNKLKGNPNQVF.

One can recognise a CP-type G domain in the interval 42–228 (LKTFEKLLPQ…LIDTPGIGVP (187 aa)). GTP is bound by residues 89 to 92 (TRKD), 160 to 165 (NVGKST), and Gly-224.

This sequence belongs to the TRAFAC class YlqF/YawG GTPase family. MTG1 subfamily.

Its subcellular location is the mitochondrion inner membrane. Functionally, mitochondrial GTPase involved in assembly of the large ribosomal subunit. Plays a role in expression of the mitochondrial translational machinery. The sequence is that of Mitochondrial GTPase 1 (MTG1) from Saccharomyces cerevisiae (strain ATCC 204508 / S288c) (Baker's yeast).